Here is a 335-residue protein sequence, read N- to C-terminus: Mycobacterial beta-ketoacyl-[acyl-carrier-protein] synthase III (335 aa).

Residues cysteine 122 and histidine 258 contribute to the active site. Residues 259–263 (QANSR) are ACP-binding. Asparagine 289 is an active-site residue.

Belongs to the thiolase-like superfamily. FabH family. In terms of assembly, homodimer.

The protein localises to the cytoplasm. It carries out the reaction malonyl-[ACP] + dodecanoyl-CoA + H(+) = 3-oxotetradecanoyl-[ACP] + CO2 + CoA. Its pathway is lipid metabolism; fatty acid biosynthesis. The protein operates within lipid metabolism; mycolic acid biosynthesis. In terms of biological role, catalyzes the condensation reaction of fatty acid synthesis by the addition to an acyl acceptor of two carbons from malonyl-ACP. Catalyzes the first condensation reaction which initiates fatty acid synthesis and may therefore play a role in governing the total rate of fatty acid production. Possesses both acetoacetyl-ACP synthase and acetyl transacylase activities. Its substrate specificity determines the biosynthesis of branched-chain and/or straight-chain of fatty acids. The protein is Mycobacterial beta-ketoacyl-[acyl-carrier-protein] synthase III of Mycolicibacterium paratuberculosis (strain ATCC BAA-968 / K-10) (Mycobacterium paratuberculosis).